A 273-amino-acid polypeptide reads, in one-letter code: NH(3)-dependent NAD(+) synthetase (273 aa).

Residue 46-53 participates in ATP binding; sequence GISGGQDS. Residue Asp-52 coordinates Mg(2+). Arg-139 serves as a coordination point for deamido-NAD(+). Residue Thr-159 participates in ATP binding. Mg(2+) is bound at residue Glu-164. Positions 172 and 179 each coordinate deamido-NAD(+). 2 residues coordinate ATP: Lys-188 and Thr-210. A deamido-NAD(+)-binding site is contributed by 259–260; the sequence is HK.

The protein belongs to the NAD synthetase family. In terms of assembly, homodimer.

It catalyses the reaction deamido-NAD(+) + NH4(+) + ATP = AMP + diphosphate + NAD(+) + H(+). It participates in cofactor biosynthesis; NAD(+) biosynthesis; NAD(+) from deamido-NAD(+) (ammonia route): step 1/1. Functionally, catalyzes the ATP-dependent amidation of deamido-NAD to form NAD. Uses ammonia as a nitrogen source. The protein is NH(3)-dependent NAD(+) synthetase of Streptococcus thermophilus (strain ATCC BAA-250 / LMG 18311).